The primary structure comprises 215 residues: Ribosomal RNA small subunit methyltransferase G (215 aa).

Residues Gly78, Leu83, 128 to 129 (AE), and Arg146 each bind S-adenosyl-L-methionine.

It belongs to the methyltransferase superfamily. RNA methyltransferase RsmG family.

It is found in the cytoplasm. It catalyses the reaction guanosine(527) in 16S rRNA + S-adenosyl-L-methionine = N(7)-methylguanosine(527) in 16S rRNA + S-adenosyl-L-homocysteine. Specifically methylates the N7 position of guanine in position 527 of 16S rRNA. The sequence is that of Ribosomal RNA small subunit methyltransferase G from Anaeromyxobacter dehalogenans (strain 2CP-1 / ATCC BAA-258).